We begin with the raw amino-acid sequence, 505 residues long: Maturase K (505 aa).

This sequence belongs to the intron maturase 2 family. MatK subfamily.

Its subcellular location is the plastid. The protein resides in the chloroplast. In terms of biological role, usually encoded in the trnK tRNA gene intron. Probably assists in splicing its own and other chloroplast group II introns. In Morus alba (White mulberry), this protein is Maturase K.